Here is a 366-residue protein sequence, read N- to C-terminus: Chorismate synthase (366 aa).

Positions 48 and 54 each coordinate NADP(+). FMN is bound by residues 125 to 127 (RSS), 238 to 239 (NA), Gly278, 293 to 297 (KPTSS), and Arg319.

Belongs to the chorismate synthase family. In terms of assembly, homotetramer. FMNH2 serves as cofactor.

The catalysed reaction is 5-O-(1-carboxyvinyl)-3-phosphoshikimate = chorismate + phosphate. The protein operates within metabolic intermediate biosynthesis; chorismate biosynthesis; chorismate from D-erythrose 4-phosphate and phosphoenolpyruvate: step 7/7. Functionally, catalyzes the anti-1,4-elimination of the C-3 phosphate and the C-6 proR hydrogen from 5-enolpyruvylshikimate-3-phosphate (EPSP) to yield chorismate, which is the branch point compound that serves as the starting substrate for the three terminal pathways of aromatic amino acid biosynthesis. This reaction introduces a second double bond into the aromatic ring system. In Ralstonia nicotianae (strain ATCC BAA-1114 / GMI1000) (Ralstonia solanacearum), this protein is Chorismate synthase.